The following is a 410-amino-acid chain: Probable serine/threonine-protein kinase PBL8 (410 aa).

The segment covering 1–10 (MGNCGTRDEA) has biased composition (basic and acidic residues). Residues 1-45 (MGNCGTRDEAAVFTPQAQAQQLQKKHSRSVSDLSDPSTPRFRDDS) are disordered. A lipid anchor (N-myristoyl glycine) is attached at glycine 2. The S-palmitoyl cysteine moiety is linked to residue cysteine 4. A Phosphothreonine modification is found at threonine 58. Positions 69 to 350 (FRPDYILGEG…DVVETLEPLQ (282 aa)) constitute a Protein kinase domain. ATP-binding positions include 75-83 (LGEGGFGTV) and lysine 104. Tyrosine 149 is modified (phosphotyrosine). The Proton acceptor role is filled by aspartate 199. A phosphoserine mark is found at serine 203 and serine 233. 2 positions are modified to phosphothreonine: threonine 234 and threonine 239. Tyrosine 247 is modified (phosphotyrosine).

The protein belongs to the protein kinase superfamily. Ser/Thr protein kinase family. As to quaternary structure, interacts with the Xanthomonas campestris effector XopAC/AvrAC.

It localises to the cell membrane. The catalysed reaction is L-seryl-[protein] + ATP = O-phospho-L-seryl-[protein] + ADP + H(+). It catalyses the reaction L-threonyl-[protein] + ATP = O-phospho-L-threonyl-[protein] + ADP + H(+). Functionally, may be involved in plant defense signaling. The sequence is that of Probable serine/threonine-protein kinase PBL8 from Arabidopsis thaliana (Mouse-ear cress).